The chain runs to 218 residues: Elongation factor Ts (218 aa).

The interval 82–85 is involved in Mg(2+) ion dislocation from EF-Tu; the sequence is TDFV.

The protein belongs to the EF-Ts family.

It is found in the cytoplasm. In terms of biological role, associates with the EF-Tu.GDP complex and induces the exchange of GDP to GTP. It remains bound to the aminoacyl-tRNA.EF-Tu.GTP complex up to the GTP hydrolysis stage on the ribosome. This is Elongation factor Ts from Prochlorococcus marinus (strain AS9601).